Here is a 138-residue protein sequence, read N- to C-terminus: ATP synthase epsilon chain (138 aa).

Belongs to the ATPase epsilon chain family. F-type ATPases have 2 components, CF(1) - the catalytic core - and CF(0) - the membrane proton channel. CF(1) has five subunits: alpha(3), beta(3), gamma(1), delta(1), epsilon(1). CF(0) has three main subunits: a, b and c.

It is found in the cell membrane. Functionally, produces ATP from ADP in the presence of a proton gradient across the membrane. This Streptococcus equi subsp. zooepidemicus (strain H70) protein is ATP synthase epsilon chain.